We begin with the raw amino-acid sequence, 492 residues long: Glutamyl-tRNA(Gln) amidotransferase subunit A (492 aa).

Catalysis depends on charge relay system residues Lys-84 and Ser-159. Catalysis depends on Ser-183, which acts as the Acyl-ester intermediate.

The protein belongs to the amidase family. GatA subfamily. In terms of assembly, heterotrimer of A, B and C subunits.

The catalysed reaction is L-glutamyl-tRNA(Gln) + L-glutamine + ATP + H2O = L-glutaminyl-tRNA(Gln) + L-glutamate + ADP + phosphate + H(+). In terms of biological role, allows the formation of correctly charged Gln-tRNA(Gln) through the transamidation of misacylated Glu-tRNA(Gln) in organisms which lack glutaminyl-tRNA synthetase. The reaction takes place in the presence of glutamine and ATP through an activated gamma-phospho-Glu-tRNA(Gln). In Anaeromyxobacter dehalogenans (strain 2CP-C), this protein is Glutamyl-tRNA(Gln) amidotransferase subunit A.